Reading from the N-terminus, the 154-residue chain is 3-dehydroquinate dehydratase (154 aa).

Tyr26 acts as the Proton acceptor in catalysis. Substrate-binding residues include Asn77, His83, and Asp90. His103 acts as the Proton donor in catalysis. Substrate-binding positions include 104 to 105 (IS) and Arg114.

The protein belongs to the type-II 3-dehydroquinase family. As to quaternary structure, homododecamer.

It carries out the reaction 3-dehydroquinate = 3-dehydroshikimate + H2O. It functions in the pathway metabolic intermediate biosynthesis; chorismate biosynthesis; chorismate from D-erythrose 4-phosphate and phosphoenolpyruvate: step 3/7. Functionally, catalyzes a trans-dehydration via an enolate intermediate. In Buchnera aphidicola subsp. Baizongia pistaciae (strain Bp), this protein is 3-dehydroquinate dehydratase.